Reading from the N-terminus, the 466-residue chain is Cysteine--tRNA ligase (466 aa).

Cys28 is a Zn(2+) binding site. A 'HIGH' region motif is present at residues 30–40 (PTVYNYIHIGN). Cys208, His233, and Glu237 together coordinate Zn(2+). The 'KMSKS' region motif lies at 265 to 269 (KMSKS). Lys268 serves as a coordination point for ATP.

The protein belongs to the class-I aminoacyl-tRNA synthetase family. Monomer. Zn(2+) is required as a cofactor.

It localises to the cytoplasm. It catalyses the reaction tRNA(Cys) + L-cysteine + ATP = L-cysteinyl-tRNA(Cys) + AMP + diphosphate. This chain is Cysteine--tRNA ligase, found in Staphylococcus aureus (strain MRSA252).